We begin with the raw amino-acid sequence, 356 residues long: MCPPVSVRHGARGMSCLYGAWLYQLVHGEQMKMCFACFKAAFLLNKFYLEMGYWEQEELSEEEEEEEVWDAEPMEHLSESESLESDSKQDAGSEQDAGSEPNTRSEQDAWQGVGSLYVPQSVSEYGGPGALVPTPSWTQWVVFSISVPTELLPQEAVPLDLGPEDVEWTQALPWRLDVLFPCSHRLIPPLSWWDILDVMPSLGQPVLLELRSLWPLDQSVAQTWLQDQKFVLLLDSIHFMCHLLSMHVCWAVRTQVQHWQVLLNPGEMWVAHLKRVLFRPRGLYPWSLSILKSSDLGMELVPAAFYLRKKGFWVGSFLPWNSSIPETWSWDPGERLFITDATICATNYHFARSFFP.

The tract at residues 1 to 78 is interaction with LIRE1; that stretch reads MCPPVSVRHG…WDAEPMEHLS (78 aa). Acidic residues predominate over residues 59–72; it reads LSEEEEEEEVWDAE. Positions 59–107 are disordered; sequence LSEEEEEEEVWDAEPMEHLSESESLESDSKQDAGSEQDAGSEPNTRSEQ. The span at 73–91 shows a compositional bias: basic and acidic residues; sequence PMEHLSESESLESDSKQDA. The important for interaction with piRNA stretch occupies residues 139–186; it reads QWVVFSISVPTELLPQEAVPLDLGPEDVEWTQALPWRLDVLFPCSHRL.

As to quaternary structure, interacts with UBR2; does not lead to Tex19.1 degradation and stabilizes it. Interacts with piRNA-associated proteins DDX4, EDC4, MAEL, PIWIL1, PIWIL2, RANBP9 and TDRD6. Interacts with L1RE1.

It is found in the cytoplasm. Required during spermatogenesis and placenta development, participating in the repression of retrotransposable elements and prevent their mobilization. Collaborates with the Piwi-interacting RNA (piRNA) pathway, which mediates the repression of transposable elements during meiosis by forming complexes composed of piRNAs and Piwi proteins. Interacts with Piwi proteins and directly binds piRNAs, a class of 24 to 30 nucleotide RNAs that are generated by a Dicer-independent mechanism and are primarily derived from transposons and other repeated sequence elements. Also during spermatogenesis, promotes, with UBR2, SPO11-dependent recombination foci to accumulate and drive robust homologous chromosome synapsis. Interacts with LINE-1 retrotransposon encoded LIRE1, stimulates LIRE1 polyubiquitination, mediated by UBR2, and degradation, inhibiting LINE-1 retrotransposon mobilization. The polypeptide is Testis-expressed protein 19.1 (Tex19.1) (Rattus norvegicus (Rat)).